A 162-amino-acid polypeptide reads, in one-letter code: Small ribosomal subunit protein uS9 (162 aa).

This sequence belongs to the universal ribosomal protein uS9 family.

This chain is Small ribosomal subunit protein uS9, found in Parvibaculum lavamentivorans (strain DS-1 / DSM 13023 / NCIMB 13966).